The sequence spans 256 residues: 6-carboxyhexanoate--CoA ligase (256 aa).

It belongs to the BioW family. In terms of assembly, homodimer. The cofactor is Mg(2+).

The enzyme catalyses heptanedioate + ATP + CoA = 6-carboxyhexanoyl-CoA + AMP + diphosphate. Its pathway is metabolic intermediate metabolism; pimeloyl-CoA biosynthesis; pimeloyl-CoA from pimelate: step 1/1. Catalyzes the transformation of pimelate into pimeloyl-CoA with concomitant hydrolysis of ATP to AMP. The sequence is that of 6-carboxyhexanoate--CoA ligase from Bacillus velezensis (strain DSM 23117 / BGSC 10A6 / LMG 26770 / FZB42) (Bacillus amyloliquefaciens subsp. plantarum).